The chain runs to 359 residues: uncharacterized protein (359 aa).

Residues 73–88 show a composition bias toward low complexity; the sequence is AATAGTTPATGASGSA. The tract at residues 73-93 is disordered; sequence AATAGTTPATGASGSARPTDA. Positions 179–354 constitute a Macro domain; that stretch reads PSTCRGDNVS…AFSAAIQAGE (176 aa).

This is an uncharacterized protein from Mycobacterium tuberculosis (strain ATCC 25618 / H37Rv).